Consider the following 324-residue polypeptide: tRNA dimethylallyltransferase (324 aa).

17 to 24 provides a ligand contact to ATP; that stretch reads GPTASGKT. Residue 19-24 coordinates substrate; sequence TASGKT. 3 interaction with substrate tRNA regions span residues 42 to 45, 166 to 170, and 251 to 256; these read DSAL, QRIQR, and RCVGYR.

It belongs to the IPP transferase family. Monomer. Requires Mg(2+) as cofactor.

The enzyme catalyses adenosine(37) in tRNA + dimethylallyl diphosphate = N(6)-dimethylallyladenosine(37) in tRNA + diphosphate. Catalyzes the transfer of a dimethylallyl group onto the adenine at position 37 in tRNAs that read codons beginning with uridine, leading to the formation of N6-(dimethylallyl)adenosine (i(6)A). The chain is tRNA dimethylallyltransferase from Burkholderia mallei (strain NCTC 10247).